A 259-amino-acid polypeptide reads, in one-letter code: DNA-directed RNA polymerase subunit Rpo3 (259 aa).

It belongs to the archaeal Rpo3/eukaryotic RPB3 RNA polymerase subunit family. As to quaternary structure, part of the RNA polymerase complex.

The protein resides in the cytoplasm. The enzyme catalyses RNA(n) + a ribonucleoside 5'-triphosphate = RNA(n+1) + diphosphate. In terms of biological role, DNA-dependent RNA polymerase (RNAP) catalyzes the transcription of DNA into RNA using the four ribonucleoside triphosphates as substrates. The chain is DNA-directed RNA polymerase subunit Rpo3 from Thermococcus kodakarensis (strain ATCC BAA-918 / JCM 12380 / KOD1) (Pyrococcus kodakaraensis (strain KOD1)).